The primary structure comprises 156 residues: Small ribosomal subunit protein uS7 (156 aa).

The protein belongs to the universal ribosomal protein uS7 family. Part of the 30S ribosomal subunit. Contacts proteins S9 and S11.

Its function is as follows. One of the primary rRNA binding proteins, it binds directly to 16S rRNA where it nucleates assembly of the head domain of the 30S subunit. Is located at the subunit interface close to the decoding center, probably blocks exit of the E-site tRNA. In Vibrio parahaemolyticus serotype O3:K6 (strain RIMD 2210633), this protein is Small ribosomal subunit protein uS7.